Reading from the N-terminus, the 451-residue chain is Phosphoglucosamine mutase (451 aa).

The Phosphoserine intermediate role is filled by serine 102. The Mg(2+) site is built by serine 102, aspartate 242, aspartate 244, and aspartate 246. Serine 102 is modified (phosphoserine).

Belongs to the phosphohexose mutase family. It depends on Mg(2+) as a cofactor. Post-translationally, activated by phosphorylation.

It catalyses the reaction alpha-D-glucosamine 1-phosphate = D-glucosamine 6-phosphate. Catalyzes the conversion of glucosamine-6-phosphate to glucosamine-1-phosphate. This chain is Phosphoglucosamine mutase, found in Staphylococcus aureus (strain bovine RF122 / ET3-1).